The sequence spans 254 residues: CRISPR-associated endonuclease Cas1 (254 aa).

Positions 78, 146, and 161 each coordinate Mn(2+).

This sequence belongs to the CRISPR-associated endonuclease Cas1 family. As to quaternary structure, homodimer, forms a heterotetramer with a Cas2 homodimer. Mg(2+) is required as a cofactor. Mn(2+) serves as cofactor.

Functionally, CRISPR (clustered regularly interspaced short palindromic repeat), is an adaptive immune system that provides protection against mobile genetic elements (viruses, transposable elements and conjugative plasmids). CRISPR clusters contain spacers, sequences complementary to antecedent mobile elements, and target invading nucleic acids. CRISPR clusters are transcribed and processed into CRISPR RNA (crRNA). Acts as a dsDNA endonuclease. Involved in the integration of spacer DNA into the CRISPR cassette. The chain is CRISPR-associated endonuclease Cas1 from Leptospira interrogans serogroup Icterohaemorrhagiae serovar Lai (strain 56601).